The primary structure comprises 149 residues: Large ribosomal subunit protein uL15C (149 aa).

Residues 21 to 40 (RIGKHRKQRGGRGNAGGQHH) form a disordered region.

Belongs to the universal ribosomal protein uL15 family. As to quaternary structure, component of the large ribosomal subunit.

Its subcellular location is the cytoplasm. It localises to the cytosol. The protein resides in the endoplasmic reticulum. Its function is as follows. Component of the large ribosomal subunit. The ribosome is a large ribonucleoprotein complex responsible for the synthesis of proteins in the cell. The sequence is that of Large ribosomal subunit protein uL15C (rpl27a-3) from Entamoeba histolytica (strain ATCC 30459 / HM-1:IMSS / ABRM).